Reading from the N-terminus, the 105-residue chain is MFRFVCVLFIALVVFCTTTSAGELVCNRPNEEYRCGSACQTTCATLGQRCPIMNIRCNDACYCKEGYARYGDDTGMCVSISQCNSKRSAIAQILRSKQLSKNSGV.

The signal sequence occupies residues 1–21; it reads MFRFVCVLFIALVVFCTTTSA. 5 cysteine pairs are disulfide-bonded: Cys-26-Cys-61, Cys-35-Cys-57, Cys-39-Cys-50, Cys-43-Cys-83, and Cys-63-Cys-77. The 58-residue stretch at 26–83 folds into the TIL domain; that stretch reads CNRPNEEYRCGSACQTTCATLGQRCPIMNIRCNDACYCKEGYARYGDDTGMCVSISQC.

It belongs to the serine protease inhibitor-like (TIL domain-containing) family. In terms of tissue distribution, expressed by the venom gland.

Its subcellular location is the secreted. Functionally, inhibits metalloprotease (human MMP3), trypsin, chymotrypsin, plasmin and microbial serine protease (proteinase K). Exhibits antifibrinolytic activity by binding plasmin and inhibiting it. Does not inhibit elastase, thrombin or microbial serine protease (subtilisin A). This Bombus ignitus (Bumblebee) protein is Venom metalloprotease inhibitor.